Here is a 1236-residue protein sequence, read N- to C-terminus: Chitinase-like protein PB1E7.04c (1236 aa).

Residues 1–19 form the signal peptide; it reads MRLISSLLLLVYSARLALS. N-linked (GlcNAc...) asparagine glycans are attached at residues Asn-21, Asn-24, Asn-54, Asn-123, Asn-225, Asn-237, Asn-255, Asn-267, Asn-277, Asn-288, and Asn-309. Residues 26 to 325 form the GH18 domain; sequence TAVLGYWGSN…EAIHKILDTK (300 aa). Disordered regions lie at residues 326 to 367, 449 to 497, and 584 to 625; these read SKHS…TSSA, VSSI…QSTL, and TSSP…STIL. A compositionally biased stretch (polar residues) spans 339–351; it reads QGLESTSSIALNP. The segment covering 352–367 has biased composition (low complexity); sequence TSSISSTSSSSSTSSA. 5 N-linked (GlcNAc...) asparagine glycosylation sites follow: Asn-715, Asn-737, Asn-768, Asn-786, and Asn-813. Disordered stretches follow at residues 804 to 836, 868 to 927, 946 to 979, and 1125 to 1159; these read ISTS…LAAN, TTAL…TSSS, TPTS…SSIA, and AASG…TPSN. The segment covering 810-821 has biased composition (polar residues); the sequence is NEYNTSFHAPTV. Over residues 822–832 the composition is skewed to low complexity; sequence SSTTSSSSTTS. Residues 1125–1156 are compositionally biased toward low complexity; sequence AASGSSTVTSSATASSSSSAATTADSSVTTDT.

Belongs to the glycosyl hydrolase 18 family. Chitinase class III subfamily.

The protein resides in the secreted. In Schizosaccharomyces pombe (strain 972 / ATCC 24843) (Fission yeast), this protein is Chitinase-like protein PB1E7.04c.